Here is a 144-residue protein sequence, read N- to C-terminus: uncharacterized protein (144 aa).

It belongs to the mimivirus L885/R898 family.

This is an uncharacterized protein from Acanthamoeba polyphaga (Amoeba).